The primary structure comprises 659 residues: 1,4-alpha-glucan branching enzyme GlgB (659 aa).

Residues M1–N12 show a composition bias toward basic and acidic residues. The tract at residues M1–K25 is disordered. The Nucleophile role is filled by D337. The Proton donor role is filled by E390.

It belongs to the glycosyl hydrolase 13 family. GlgB subfamily. Monomer.

It catalyses the reaction Transfers a segment of a (1-&gt;4)-alpha-D-glucan chain to a primary hydroxy group in a similar glucan chain.. It participates in glycan biosynthesis; glycogen biosynthesis. In terms of biological role, catalyzes the formation of the alpha-1,6-glucosidic linkages in glycogen by scission of a 1,4-alpha-linked oligosaccharide from growing alpha-1,4-glucan chains and the subsequent attachment of the oligosaccharide to the alpha-1,6 position. This Clostridium perfringens (strain ATCC 13124 / DSM 756 / JCM 1290 / NCIMB 6125 / NCTC 8237 / Type A) protein is 1,4-alpha-glucan branching enzyme GlgB.